The following is a 541-amino-acid chain: Nuclear receptor subfamily 5 group A member 2 (541 aa).

Residues 1–10 (MSSNSDTGDL) show a composition bias toward polar residues. Residues 1 to 35 (MSSNSDTGDLQESLKHGLTPIGAGLPDRHGSPIPA) form a disordered region. Positions 83-154 (EELCPVCGDK…KCLSVGMKLE (72 aa)) form a DNA-binding region, nuclear receptor. Cysteine 86, cysteine 89, cysteine 103, cysteine 106, cysteine 122, cysteine 128, cysteine 138, and cysteine 141 together coordinate Zn(2+). NR C4-type zinc fingers lie at residues 86-106 (CPVC…CESC) and 122-146 (CIEN…FQKC). The interval 152 to 167 (KLEAVRADRMRGGRNK) is C-terminal extension (CTE). The short motif at 168–187 (FGPMYKRDRALKQQKKALIR) is the FTZ-F1 box element. A Glycyl lysine isopeptide (Lys-Gly) (interchain with G-Cter in SUMO1) cross-link involves residue lysine 270. Residues 300–539 (SIPHLILELL…NLLIEMLHAK (240 aa)) enclose the NR LBD domain. A phospholipid derivative is bound by residues 421–424 (GATL), tyrosine 516, and lysine 520. The tract at residues 528–539 (YNNLLIEMLHAK) is AF-2.

Belongs to the nuclear hormone receptor family. NR5 subfamily. In terms of assembly, monomer; Binds DNA as a monomer. Interacts with nuclear receptor corepressors NR0B1 and NR0B2; repressing NR5A2 nuclear receptor activity. Interacts with nuclear receptor coactivators CTNNB1, PPARGC1A and NCOA2; interaction takes place following ligand-binding and promotes target gene activation. Interacts (when sumoylated) with GPS2; interaction with GPS2 onto hepatic acute phase protein promoters prevents N-Cor corepressor complex dissociation. Interacts with HNF1A. Interacts with GRIP1. Post-translationally, sumoylated by SUMO1 at Lys-270 during the hepatic acute phase response, leading to promote interaction with GPS2 and prevent N-Cor corepressor complex dissociation. Abundantly expressed in pancreas, less in liver, very low levels in heart and lung. Expressed in the Hep-G2 cell line. Isoform 1 and isoform 2 seem to be present in fetal and adult liver and Hep-G2 cells.

It is found in the nucleus. The protein resides in the chromosome. Activated by synthetic agonists RR-RJW100, SR-RJW100, endo sulfamide compound 6N and GSK8470. Orphan nuclear receptor that binds DNA as a monomer to the 5'-TCAAGGCCA-3' sequence and controls expression of target genes: regulates key biological processes, such as early embryonic development, cholesterol and bile acid synthesis pathways, as well as liver and pancreas morphogenesis. Ligand-binding causes conformational change which causes recruitment of coactivators, promoting target gene activation. The specific ligand is unknown, but specific phospholipids, such as phosphatidylethanolamine, phosphatidylserine, dilauroyl phosphatidylcholine and diundecanoyl phosphatidylcholine can act as ligand in vitro. Acts as a pioneer transcription factor, which unwraps target DNA from histones and elicits local opening of closed chromatin. Plays a central role during preimplantation stages of embryonic development. Plays a minor role in zygotic genome activation (ZGA) by regulating a small set of two-cell stage genes. Plays a major role in morula development (2-16 cells embryos) by acting as a master regulator at the 8-cell stage, controlling expression of lineage-specifying transcription factors and genes involved in mitosis, telomere maintenance and DNA repair. Zygotic NR5A2 binds to both closed and open chromatin with other transcription factors, often at SINE B1/Alu repeats DNA elements, promoting chromatin accessibility at nearby regulatory regions. Also involved in the epiblast stage of development and embryonic stem cell pluripotency, by promoting expression of POU5F1/OCT4. Regulates other processes later in development, such as formation of connective tissue in lower jaw and middle ear, neural stem cell differentiation, ovarian follicle development and Sertoli cell differentiation. Involved in exocrine pancreas development and acinar cell differentiation. Acts as an essential transcriptional regulator of lipid metabolism. Key regulator of cholesterol 7-alpha-hydroxylase gene (CYP7A) expression in liver. Also acts as a negative regulator of inflammation in different organs, such as, liver and pancreas. Protects against intestinal inflammation via its ability to regulate glucocorticoid production. Plays an anti-inflammatory role during the hepatic acute phase response by acting as a corepressor: inhibits the hepatic acute phase response by preventing dissociation of the N-Cor corepressor complex. Acts as a regulator of immunity by promoting lymphocyte T-cell development, proliferation and effector functions. Also involved in resolution of endoplasmic reticulum stress in the liver. In terms of biological role, in constrast to isoform 1 and isoform 2, does not induce cholesterol 7-alpha-hydroxylase gene (CYP7A) promoter activity. Functionally, (Microbial infection) Plays a crucial role for hepatitis B virus gene transcription and DNA replication. Mechanistically, synergistically cooperates with HNF1A to up-regulate the activity of one of the critical cis-elements in the hepatitis B virus genome enhancer II (ENII). The protein is Nuclear receptor subfamily 5 group A member 2 of Homo sapiens (Human).